Reading from the N-terminus, the 515-residue chain is Cytoplasmic dynein 1 light intermediate chain 1 (515 aa).

Low complexity predominate over residues 1–24; the sequence is MAAVGRAGSFGSSSASGAANNASA. The interval 1–34 is disordered; that stretch reads MAAVGRAGSFGSSSASGAANNASAELRAGGEEDD. Residue 64 to 71 coordinates ATP; the sequence is GEDGAGKT. Disordered regions lie at residues 370-424 and 445-515; these read QSQL…DPNM and KTGS…GEAS. Over residues 397 to 409 the composition is skewed to polar residues; sequence RTPNRSVTSNVAS. Over residues 448 to 468 the composition is skewed to gly residues; sequence SPGGPGGVGGSPGGGSAGGTG. The span at 490-499 shows a compositional bias: basic and acidic residues; sequence ELDRISRKPE. Residues 502–515 show a composition bias toward polar residues; sequence SPTSPTSPTEGEAS.

This sequence belongs to the dynein light intermediate chain family. In terms of assembly, homodimer. The cytoplasmic dynein 1 complex consists of two catalytic heavy chains (HCs) and a number of non-catalytic subunits presented by intermediate chains (ICs). Phosphorylated.

The protein resides in the cytoplasm. It is found in the cytoskeleton. It localises to the chromosome. Its subcellular location is the centromere. The protein localises to the kinetochore. The protein resides in the spindle pole. It is found in the recycling endosome membrane. Its function is as follows. Acts as one of several non-catalytic accessory components of the cytoplasmic dynein 1 complex that are thought to be involved in linking dynein to cargos and to adapter proteins that regulate dynein function. Cytoplasmic dynein 1 acts as a motor for the intracellular retrograde motility of vesicles and organelles along microtubules. May play a role in binding dynein to membranous organelles or chromosomes. May regulate the movement of peripheral sorting endosomes along microtubule tracks toward the microtubule organizing center/centrosome, generating the endosomal recycling compartment. The chain is Cytoplasmic dynein 1 light intermediate chain 1 (DYNC1LI1) from Gallus gallus (Chicken).